A 156-amino-acid polypeptide reads, in one-letter code: E3 ubiquitin-protein ligase RNF181 (156 aa).

An RING-type; atypical zinc finger spans residues 79 to 120 (CPVCLLEFEEQESVREMPCKHLFHTGCILPWLNKTNSCPLCR). A disordered region spans residues 135–156 (KDKERRRQREHRLEDLHGAMYT).

Belongs to the RNF181 family.

The enzyme catalyses S-ubiquitinyl-[E2 ubiquitin-conjugating enzyme]-L-cysteine + [acceptor protein]-L-lysine = [E2 ubiquitin-conjugating enzyme]-L-cysteine + N(6)-ubiquitinyl-[acceptor protein]-L-lysine.. It functions in the pathway protein modification; protein ubiquitination. Its function is as follows. E3 ubiquitin-protein ligase which accepts ubiquitin from an E2 ubiquitin-conjugating enzyme in the form of a thioester and then directly transfers the ubiquitin to targeted substrates. Catalyzes monoubiquitination of 26S proteasome subunit PSMC2/RPT1. The polypeptide is E3 ubiquitin-protein ligase RNF181 (rnf181) (Danio rerio (Zebrafish)).